The following is a 234-amino-acid chain: Phosphoribosylformylglycinamidine synthase subunit PurQ (234 aa).

The 229-residue stretch at 6–234 (VGVVVFPGSN…ESLFRSLTGV (229 aa)) folds into the Glutamine amidotransferase type-1 domain. Cys-89 serves as the catalytic Nucleophile. Catalysis depends on residues His-206 and Glu-208.

In terms of assembly, part of the FGAM synthase complex composed of 1 PurL, 1 PurQ and 2 PurS subunits.

The protein localises to the cytoplasm. It carries out the reaction N(2)-formyl-N(1)-(5-phospho-beta-D-ribosyl)glycinamide + L-glutamine + ATP + H2O = 2-formamido-N(1)-(5-O-phospho-beta-D-ribosyl)acetamidine + L-glutamate + ADP + phosphate + H(+). The catalysed reaction is L-glutamine + H2O = L-glutamate + NH4(+). The protein operates within purine metabolism; IMP biosynthesis via de novo pathway; 5-amino-1-(5-phospho-D-ribosyl)imidazole from N(2)-formyl-N(1)-(5-phospho-D-ribosyl)glycinamide: step 1/2. In terms of biological role, part of the phosphoribosylformylglycinamidine synthase complex involved in the purines biosynthetic pathway. Catalyzes the ATP-dependent conversion of formylglycinamide ribonucleotide (FGAR) and glutamine to yield formylglycinamidine ribonucleotide (FGAM) and glutamate. The FGAM synthase complex is composed of three subunits. PurQ produces an ammonia molecule by converting glutamine to glutamate. PurL transfers the ammonia molecule to FGAR to form FGAM in an ATP-dependent manner. PurS interacts with PurQ and PurL and is thought to assist in the transfer of the ammonia molecule from PurQ to PurL. The chain is Phosphoribosylformylglycinamidine synthase subunit PurQ from Chlorobium chlorochromatii (strain CaD3).